Consider the following 129-residue polypeptide: Glutaredoxin-like protein ECU08_1380 (129 aa).

The Glutaredoxin domain occupies 26–126; that stretch reads EADYGEMVRR…PLLTQNREPV (101 aa).

This sequence belongs to the glutaredoxin family.

It localises to the cytoplasm. In terms of biological role, has a glutathione-disulfide oxidoreductase activity in the presence of NADPH and glutathione reductase. Reduces low molecular weight disulfides and proteins. This is Glutaredoxin-like protein ECU08_1380 from Encephalitozoon cuniculi (strain GB-M1) (Microsporidian parasite).